The chain runs to 257 residues: Thiazole synthase (257 aa).

Lysine 96 serves as the catalytic Schiff-base intermediate with DXP. 1-deoxy-D-xylulose 5-phosphate contacts are provided by residues glycine 157, 184-185 (AG), and 206-207 (NT).

It belongs to the ThiG family. In terms of assembly, homotetramer. Forms heterodimers with either ThiH or ThiS.

The protein localises to the cytoplasm. The enzyme catalyses [ThiS sulfur-carrier protein]-C-terminal-Gly-aminoethanethioate + 2-iminoacetate + 1-deoxy-D-xylulose 5-phosphate = [ThiS sulfur-carrier protein]-C-terminal Gly-Gly + 2-[(2R,5Z)-2-carboxy-4-methylthiazol-5(2H)-ylidene]ethyl phosphate + 2 H2O + H(+). Its pathway is cofactor biosynthesis; thiamine diphosphate biosynthesis. Its function is as follows. Catalyzes the rearrangement of 1-deoxy-D-xylulose 5-phosphate (DXP) to produce the thiazole phosphate moiety of thiamine. Sulfur is provided by the thiocarboxylate moiety of the carrier protein ThiS. In vitro, sulfur can be provided by H(2)S. The polypeptide is Thiazole synthase (Allorhizobium ampelinum (strain ATCC BAA-846 / DSM 112012 / S4) (Agrobacterium vitis (strain S4))).